The following is a 388-amino-acid chain: Zinc finger CCCH domain-containing protein 47 (388 aa).

2 disordered regions span residues 1-130 (MADP…MAPL) and 144-282 (PLHE…TPSA). Basic and acidic residues-rich tracts occupy residues 61-109 (AAND…KSEV) and 181-193 (PDNHDHDPRHLPR). Residues 260 to 274 (ASSSSSSSSAGQQGS) show a composition bias toward low complexity. 2 C3H1-type zinc fingers span residues 321-348 (HHKIALCSKWRKGRCHNGAACRYSHGEE) and 359-388 (GGGGRPCPELAAAKGWCRYGLNCKYCHGGV).

The chain is Zinc finger CCCH domain-containing protein 47 from Oryza sativa subsp. japonica (Rice).